The primary structure comprises 333 residues: GTP 3',8-cyclase (333 aa).

A Radical SAM core domain is found at 7–221 (KFGRVHDYIR…FEACNEAGYE (215 aa)). Residue Arg-16 participates in GTP binding. Residues Cys-23 and Cys-27 each coordinate [4Fe-4S] cluster. Tyr-29 is an S-adenosyl-L-methionine binding site. Cys-30 is a [4Fe-4S] cluster binding site. Arg-66 contributes to the GTP binding site. Gly-70 serves as a coordination point for S-adenosyl-L-methionine. Thr-97 provides a ligand contact to GTP. Residue Ser-121 coordinates S-adenosyl-L-methionine. Residue Lys-158 participates in GTP binding. Residue Met-192 coordinates S-adenosyl-L-methionine. Positions 257 and 260 each coordinate [4Fe-4S] cluster. GTP is bound at residue 262 to 264 (RLR). Cys-274 provides a ligand contact to [4Fe-4S] cluster.

The protein belongs to the radical SAM superfamily. MoaA family. As to quaternary structure, monomer and homodimer. Requires [4Fe-4S] cluster as cofactor.

The enzyme catalyses GTP + AH2 + S-adenosyl-L-methionine = (8S)-3',8-cyclo-7,8-dihydroguanosine 5'-triphosphate + 5'-deoxyadenosine + L-methionine + A + H(+). It functions in the pathway cofactor biosynthesis; molybdopterin biosynthesis. Catalyzes the cyclization of GTP to (8S)-3',8-cyclo-7,8-dihydroguanosine 5'-triphosphate. The sequence is that of GTP 3',8-cyclase from Listeria monocytogenes serotype 4b (strain CLIP80459).